The chain runs to 355 residues: MCELLGICFNKKVNVELSLNSFKHRSEDHPNGWGIAFYPDGFVRVIKEPIKMNEALLAECVRWTKIKSNIFIAHIRKASAGSESYVNTHPFVRKLEDKEIAFAHNGTLLGYEDLELDGYYPIGETDSEYVFCYLLSQIEKREIEWNKEGFDEMLDILLDINYYGAFNCLFSDGEYLFAYKDYRGRRELHFLKRKPPYGRIRLEDEDYIINLGDVKSVREEGFIIATNPLTNEDWKSFENGELMVFKNGEMIYSNKRLTDLELKILKILRESPHRVSLKKIIENLEYLSRNIRHDASVVRIGIRSLLDKGYIKQDSRDTVNWDDLEATFYTKPEKRVEIDKRLKGFRWRRNRIIMS.

The For GATase activity role is filled by cysteine 2. The Glutamine amidotransferase type-2 domain occupies 2-248 (CELLGICFNK…NGELMVFKNG (247 aa)).

This is an uncharacterized protein from Methanocaldococcus jannaschii (strain ATCC 43067 / DSM 2661 / JAL-1 / JCM 10045 / NBRC 100440) (Methanococcus jannaschii).